The primary structure comprises 159 residues: Ribosomal RNA large subunit methyltransferase H (159 aa).

S-adenosyl-L-methionine contacts are provided by residues Gly-108 and 127–132 (FSKMTF).

Belongs to the RNA methyltransferase RlmH family. Homodimer.

The protein localises to the cytoplasm. It carries out the reaction pseudouridine(1915) in 23S rRNA + S-adenosyl-L-methionine = N(3)-methylpseudouridine(1915) in 23S rRNA + S-adenosyl-L-homocysteine + H(+). In terms of biological role, specifically methylates the pseudouridine at position 1915 (m3Psi1915) in 23S rRNA. The protein is Ribosomal RNA large subunit methyltransferase H of Clostridium beijerinckii (strain ATCC 51743 / NCIMB 8052) (Clostridium acetobutylicum).